Reading from the N-terminus, the 156-residue chain is Small ribosomal subunit protein uS7 (156 aa).

Belongs to the universal ribosomal protein uS7 family. In terms of assembly, part of the 30S ribosomal subunit. Contacts proteins S9 and S11.

Its function is as follows. One of the primary rRNA binding proteins, it binds directly to 16S rRNA where it nucleates assembly of the head domain of the 30S subunit. Is located at the subunit interface close to the decoding center, probably blocks exit of the E-site tRNA. The sequence is that of Small ribosomal subunit protein uS7 from Dictyoglomus thermophilum (strain ATCC 35947 / DSM 3960 / H-6-12).